A 92-amino-acid polypeptide reads, in one-letter code: Signal recognition particle 19 kDa protein (92 aa).

Belongs to the SRP19 family. As to quaternary structure, part of the signal recognition particle protein translocation system, which is composed of SRP and FtsY. Archaeal SRP consists of a 7S RNA molecule of 300 nucleotides and two protein subunits: SRP54 and SRP19.

The protein resides in the cytoplasm. In terms of biological role, involved in targeting and insertion of nascent membrane proteins into the cytoplasmic membrane. Binds directly to 7S RNA and mediates binding of the 54 kDa subunit of the SRP. In Halobacterium salinarum (strain ATCC 29341 / DSM 671 / R1), this protein is Signal recognition particle 19 kDa protein.